We begin with the raw amino-acid sequence, 326 residues long: Endochitinase (326 aa).

The N-terminal stretch at 1–25 (MVYCTASLPLLLLLLVGLLAGEAFA) is a signal peptide. The region spanning 26-66 (EQCGRQAGGALCPGGLCCSQFGWCGSTSDYCGPTCQSQCGG) is the Chitin-binding type-1 domain. 7 disulfide bridges follow: C28–C43, C37–C49, C42–C56, C60–C64, C96–C158, C170–C178, and C277–C309. E140 functions as the Proton donor in the catalytic mechanism.

It belongs to the glycosyl hydrolase 19 family. Chitinase class I subfamily. Expressed in the pulp of the fruit (at protein level). Expressed in mesocarp (at protein level).

The catalysed reaction is Random endo-hydrolysis of N-acetyl-beta-D-glucosaminide (1-&gt;4)-beta-linkages in chitin and chitodextrins.. Its function is as follows. Defense against chitin-containing fungal pathogens. Has in vitro antifungal activity against F.oxysporum inhibiting its growth and the branching of its hyphae. Has endochitinase activity, but no exochitinase or lysozyme activities. In Persea americana (Avocado), this protein is Endochitinase.